The primary structure comprises 850 residues: DNA mismatch repair protein MutS (850 aa).

608 to 615 (GPNMGGKS) contributes to the ATP binding site.

Belongs to the DNA mismatch repair MutS family.

In terms of biological role, this protein is involved in the repair of mismatches in DNA. It is possible that it carries out the mismatch recognition step. This protein has a weak ATPase activity. This Thiobacillus denitrificans (strain ATCC 25259 / T1) protein is DNA mismatch repair protein MutS.